The following is a 290-amino-acid chain: MSFDVRRFDIYRKVPKDLTQPTYTGAFISICCCVFMLFLFLSELTGFIATEIVNELYVDDPDKDSGGKIDVSLNISLPNLHCDLVGLDIQDEMGRHEVGHIENSMKVPLNNGHGCRFEGEFSINKVPGNFHVSTHSATAQPQSPDMTHIIHKLAFGAKLQVQHVQGAFNALGGADRLQSNALASHDYILKIVPTVYEELGGKQRFSYQYTVANKEYVAYSHTGRIIPAIWFRYDLSPITVKYTERRRPFYRFITTICAIIGGTFTVAGIIDSCIFTASEAWKKIQIGKMS.

The Cytoplasmic segment spans residues 1 to 27; the sequence is MSFDVRRFDIYRKVPKDLTQPTYTGAF. Residues 28–48 traverse the membrane as a helical segment; the sequence is ISICCCVFMLFLFLSELTGFI. Topologically, residues 49-254 are lumenal; sequence ATEIVNELYV…RRRPFYRFIT (206 aa). Asn-74 is a glycosylation site (N-linked (GlcNAc...) asparagine). A helical membrane pass occupies residues 255-275; that stretch reads TICAIIGGTFTVAGIIDSCIF. Residues 276 to 290 lie on the Cytoplasmic side of the membrane; the sequence is TASEAWKKIQIGKMS.

Belongs to the ERGIC family.

Its subcellular location is the endoplasmic reticulum membrane. It is found in the endoplasmic reticulum-Golgi intermediate compartment membrane. The protein localises to the golgi apparatus membrane. Possible role in transport between endoplasmic reticulum and Golgi. The chain is Endoplasmic reticulum-Golgi intermediate compartment protein 1 (ergic1) from Danio rerio (Zebrafish).